A 253-amino-acid polypeptide reads, in one-letter code: DnaJ homolog subfamily C member 8 (253 aa).

Ala-2 carries the post-translational modification N-acetylalanine. Ser-35 carries the post-translational modification Phosphoserine. One can recognise a J domain in the interval 57 to 124 (NPFEVLQIDP…QKKRALDVIQ (68 aa)). The residue at position 146 (Lys-146) is an N6-acetyllysine. The segment covering 181 to 222 (EAKEMHERKRQREEEIEAQEKAKREREWQKNFEESRDGRVDS) has biased composition (basic and acidic residues). Residues 181 to 253 (EAKEMHERKR…PPKVKMEQRE (73 aa)) are disordered. 2 short sequence motifs (nuclear localization signal) span residues 189–192 (KRQR) and 203–206 (KRER). Ser-222 is subject to Phosphoserine. The span at 231 to 240 (KGKKEKKNRT) shows a compositional bias: basic residues. The interval 232 to 253 (GKKEKKNRTFLRPPKVKMEQRE) is essential for polyglutamine aggregation suppression.

In terms of assembly, interacts with SRPK1. Interacts with HSP70 (HSPA1A or HSPA1B). Ubiquitous.

It localises to the nucleus. Functionally, suppresses polyglutamine (polyQ) aggregation of ATXN3 in neuronal cells. This is DnaJ homolog subfamily C member 8 (DNAJC8) from Homo sapiens (Human).